A 349-amino-acid chain; its full sequence is 1-acylglycerol-3-phosphate O-acyltransferase ABHD5 (349 aa).

Ala2 bears the N-acetylalanine mark. Residues 77–184 form the AB hydrolase-1 domain; the sequence is PLVLLHGFGG…LVEPWGFPER (108 aa). Ser122 bears the Phosphoserine mark. The HXXXXD motif motif lies at 327–332; the sequence is HYVYAD.

This sequence belongs to the peptidase S33 family. ABHD4/ABHD5 subfamily. Interacts with ADRP, PLIN and PNPLA2. Interacts with PLIN5; promotes interaction with PNPLA2. Widely expressed in various tissues, including lymphocytes, liver, skeletal muscle and brain. Expressed by upper epidermal layers and dermal fibroblasts in skin, hepatocytes and neurons (at protein level).

It is found in the cytoplasm. The protein resides in the lipid droplet. The protein localises to the cytosol. The catalysed reaction is a 1-acyl-sn-glycero-3-phosphate + an acyl-CoA = a 1,2-diacyl-sn-glycero-3-phosphate + CoA. The enzyme catalyses 1-(9Z-octadecenoyl)-sn-glycero-3-phosphate + hexadecanoyl-CoA = 1-(9Z)-octadecenoyl-2-hexadecanoyl-sn-glycero-3-phosphate + CoA. It catalyses the reaction 1-(9Z-octadecenoyl)-sn-glycero-3-phosphate + octadecanoyl-CoA = 1-(9Z-octadecenoyl)-2-octadecanoyl-sn-glycero-3-phosphate + CoA. It carries out the reaction 1-(9Z-octadecenoyl)-sn-glycero-3-phosphate + (9Z)-octadecenoyl-CoA = 1,2-di-(9Z-octadecenoyl)-sn-glycero-3-phosphate + CoA. The catalysed reaction is 1-(9Z-octadecenoyl)-sn-glycero-3-phosphate + (5Z,8Z,11Z,14Z)-eicosatetraenoyl-CoA = 1-(9Z)-octadecenoyl-2-(5Z,8Z,11Z,14Z)-eicosatetraenoyl-sn-glycero-3-phosphate + CoA. The enzyme catalyses eicosanoyl-CoA + 1-(9Z-octadecenoyl)-sn-glycero-3-phosphate = 1-(9Z)-octadecenoyl-2-eicosanoyl-sn-glycero-3-phosphate + CoA. It catalyses the reaction 1-hexadecanoyl-sn-glycero-3-phosphate + (9Z)-octadecenoyl-CoA = 1-hexadecanoyl-2-(9Z-octadecenoyl)-sn-glycero-3-phosphate + CoA. It carries out the reaction 1-octadecanoyl-sn-glycero-3-phosphate + (9Z)-octadecenoyl-CoA = 1-octadecanoyl-2-(9Z-octadecenoyl)-sn-glycero-3-phosphate + CoA. The catalysed reaction is 1-(5Z,8Z,11Z,14Z-eicosatetraenoyl)-sn-glycero-3-phosphate + (9Z)-octadecenoyl-CoA = 1-(5Z,8Z,11Z,14Z)-eicosatetraenoyl-2-(9Z)-octadecenoyl-sn-glycero-3-phosphate + CoA. Acyltransferase activity is inhibited by detergents such as Triton X-100 and 3-[(3-cholamidopropyl)dimethylammonio]-1-propanesulfonate (CHAPS). Acyltransferase activity is inhibited by the presence of magnesium and calcium. Coenzyme A-dependent lysophosphatidic acid acyltransferase that catalyzes the transfer of an acyl group on a lysophosphatidic acid. Functions preferentially with 1-oleoyl-lysophosphatidic acid followed by 1-palmitoyl-lysophosphatidic acid, 1-stearoyl-lysophosphatidic acid and 1-arachidonoyl-lysophosphatidic acid as lipid acceptor. Functions preferentially with arachidonoyl-CoA followed by oleoyl-CoA as acyl group donors. Functions in phosphatidic acid biosynthesis. May regulate the cellular storage of triacylglycerol through activation of the phospholipase PNPLA2. Involved in keratinocyte differentiation. Regulates lipid droplet fusion. The chain is 1-acylglycerol-3-phosphate O-acyltransferase ABHD5 from Homo sapiens (Human).